Reading from the N-terminus, the 365-residue chain is tRNA/tmRNA (uracil-C(5))-methyltransferase (365 aa).

Positions 189, 217, 222, 238, and 298 each coordinate S-adenosyl-L-methionine. The active-site Nucleophile is the Cys-323. Glu-357 acts as the Proton acceptor in catalysis.

Belongs to the class I-like SAM-binding methyltransferase superfamily. RNA M5U methyltransferase family. TrmA subfamily.

It carries out the reaction uridine(54) in tRNA + S-adenosyl-L-methionine = 5-methyluridine(54) in tRNA + S-adenosyl-L-homocysteine + H(+). The enzyme catalyses uridine(341) in tmRNA + S-adenosyl-L-methionine = 5-methyluridine(341) in tmRNA + S-adenosyl-L-homocysteine + H(+). Functionally, dual-specificity methyltransferase that catalyzes the formation of 5-methyluridine at position 54 (m5U54) in all tRNAs, and that of position 341 (m5U341) in tmRNA (transfer-mRNA). The polypeptide is tRNA/tmRNA (uracil-C(5))-methyltransferase (Shewanella denitrificans (strain OS217 / ATCC BAA-1090 / DSM 15013)).